The chain runs to 255 residues: Capsid protein (255 aa).

Residues 1–25 (MVQKRKDLRRSDAGSAVRAKLHKAS) carry the Bipartite nuclear localization signal motif.

It belongs to the geminiviridae capsid protein family. Homomultimer. Interacts with the movement protein. Binds to single-stranded and double-stranded viral DNA.

The protein localises to the virion. Its subcellular location is the host nucleus. Functionally, encapsidates the viral genome into characteristic twinned ('geminate') particles. Binds the genomic viral ssDNA and shuttles it into and out of the cell nucleus. Plays a role in protection of the genome from degradation, virus acquisition and transmission by insect vectors, infectivity, and systemic movement. The CP of monopartite geminiviruses is absolutely essential for virus movement. In Miscanthus streak virus (isolate 91) (MiSV), this protein is Capsid protein.